The primary structure comprises 305 residues: Endonuclease III-like protein 1 (305 aa).

The N-terminal 28 residues, 1 to 28 (MNAAGVRMVVTRARSRGTGASLRRRGEK), are a transit peptide targeting the mitochondrion. The disordered stretch occupies residues 1-83 (MNAAGVRMVV…HLQAPSWQPQ (83 aa)). Serine 64 bears the Phosphoserine mark. In terms of domain architecture, HhH spans 192 to 216 (RYDGDIPASVAELVALPGVGPKMAH). The active-site Nucleophile; for N-glycosylase activity is lysine 213. Positions 283, 290, 293, and 299 each coordinate [4Fe-4S] cluster.

This sequence belongs to the Nth/MutY family. Interacts with YBX1. Interacts with ERCC5/XPG; the interaction stimulates NTHL1 activity and NTHL1 binding to its DNA substrate. The cofactor is [4Fe-4S] cluster.

The protein resides in the nucleus. It localises to the mitochondrion. The enzyme catalyses 2'-deoxyribonucleotide-(2'-deoxyribose 5'-phosphate)-2'-deoxyribonucleotide-DNA = a 3'-end 2'-deoxyribonucleotide-(2,3-dehydro-2,3-deoxyribose 5'-phosphate)-DNA + a 5'-end 5'-phospho-2'-deoxyribonucleoside-DNA + H(+). In terms of biological role, bifunctional DNA N-glycosylase with associated apurinic/apyrimidinic (AP) lyase function that catalyzes the first step in base excision repair (BER), the primary repair pathway for the repair of oxidative DNA damage. The DNA N-glycosylase activity releases the damaged DNA base from DNA by cleaving the N-glycosidic bond, leaving an AP site. The AP lyase activity cleaves the phosphodiester bond 3' to the AP site by a beta-elimination. Primarily recognizes and repairs oxidative base damage of pyrimidines. This is Endonuclease III-like protein 1 from Bos taurus (Bovine).